The chain runs to 255 residues: Imidazole glycerol phosphate synthase subunit HisF (255 aa).

Active-site residues include aspartate 11 and aspartate 130.

Belongs to the HisA/HisF family. In terms of assembly, heterodimer of HisH and HisF.

The protein localises to the cytoplasm. The catalysed reaction is 5-[(5-phospho-1-deoxy-D-ribulos-1-ylimino)methylamino]-1-(5-phospho-beta-D-ribosyl)imidazole-4-carboxamide + L-glutamine = D-erythro-1-(imidazol-4-yl)glycerol 3-phosphate + 5-amino-1-(5-phospho-beta-D-ribosyl)imidazole-4-carboxamide + L-glutamate + H(+). It functions in the pathway amino-acid biosynthesis; L-histidine biosynthesis; L-histidine from 5-phospho-alpha-D-ribose 1-diphosphate: step 5/9. Its function is as follows. IGPS catalyzes the conversion of PRFAR and glutamine to IGP, AICAR and glutamate. The HisF subunit catalyzes the cyclization activity that produces IGP and AICAR from PRFAR using the ammonia provided by the HisH subunit. The chain is Imidazole glycerol phosphate synthase subunit HisF from Campylobacter jejuni (strain RM1221).